Reading from the N-terminus, the 417-residue chain is D-galactonate dehydratase family member Dd703_0947 (417 aa).

A substrate-binding site is contributed by histidine 127. Tyrosine 158 (proton donor/acceptor) is an active-site residue. Aspartate 223 lines the Mg(2+) pocket. The active-site Proton donor/acceptor is the histidine 225. 2 residues coordinate Mg(2+): glutamate 249 and glutamate 275. Substrate is bound by residues glutamate 275, arginine 296, histidine 325, aspartate 329, and glutamate 352.

Belongs to the mandelate racemase/muconate lactonizing enzyme family. GalD subfamily. The cofactor is Mg(2+).

The catalysed reaction is D-mannonate = 2-dehydro-3-deoxy-D-gluconate + H2O. It carries out the reaction D-gluconate = 2-dehydro-3-deoxy-D-gluconate + H2O. Its function is as follows. Has low dehydratase activity with D-mannonate and D-gluconate, suggesting that these are not physiological substrates and that it has no significant role in the in vivo degradation of these compounds. Has no detectable activity with a panel of 70 other acid sugars (in vitro). This Musicola paradisiaca (strain Ech703) (Dickeya paradisiaca) protein is D-galactonate dehydratase family member Dd703_0947.